The sequence spans 114 residues: TYRO protein tyrosine kinase-binding protein (114 aa).

Positions 1–21 are cleaved as a signal peptide; that stretch reads MGALEPSWCLLFLPVLLTVGG. Residues 22 to 42 are Extracellular-facing; sequence LSPVQAQSDTFPRCDCSSVSP. Residues 43–63 form a helical membrane-spanning segment; that stretch reads GVLAGIVLGDLVLTLLIALAV. Residue Asp52 coordinates Ca(2+). Residues 64–114 lie on the Cytoplasmic side of the membrane; that stretch reads YSLGRLVSRGQGTAEGTRKQHIAETESPYQELQGQRPEVYSDLNTQRQYYR. Positions 74-107 are disordered; sequence QGTAEGTRKQHIAETESPYQELQGQRPEVYSDLN. Residues 81-109 form the ITAM domain; it reads RKQHIAETESPYQELQGQRPEVYSDLNTQ. Residues Tyr92 and Tyr103 each carry the phosphotyrosine modification.

It belongs to the TYROBP family. As to quaternary structure, homodimer; disulfide-linked. Homotrimer; disulfide-linked. Homotetramer; disulfide-linked. Homotrimers and homotetramers form when low levels of partner receptors are available and are competitive with assembly with interacting receptors. They may represent alternative oligomerization states or may be intermediates in the receptor assembly process. Binding of a metal cation aids in homooligomerization through coordination of the metal ion by the subunits of the oligomer. Interacts with TREM1. Interacts with TREM2. Interacts with TREM3. Interacts with CLECSF5. Interacts with CD300LB and CD300C2. Interacts with CD300E. Interacts (via ITAM domain) with SYK (via SH2 domains); activates SYK mediating neutrophil and macrophage integrin-mediated activation. Interacts (via transmembrane domain) with KLRK1 isoform 2 (via transmembrane domain); the interaction is required for KLRK1 NK cell surface expression and NK cell-mediated cytotoxicity. Interacts with KLRC2. Interacts with CD300H. Interacts with KLRD1. Interacts with KLRA4 and KLRA8. Tyrosine phosphorylated. Following ligand binding by associated receptors, tyrosine phosphorylated in the ITAM domain which leads to activation of additional tyrosine kinases and subsequent cell activation. Expressed on microglia (at protein level). Expressed on oligodendrocytes (at protein level). Expressed on macrophages and osteoclasts. Expressed on dendritic cells in liver, spleen, kidney and lung with highest levels in liver dendritic cells.

The protein localises to the cell membrane. In terms of biological role, adapter protein which non-covalently associates with activating receptors found on the surface of a variety of immune cells to mediate signaling and cell activation following ligand binding by the receptors. TYROBP is tyrosine-phosphorylated in the ITAM domain following ligand binding by the associated receptors which leads to activation of additional tyrosine kinases and subsequent cell activation. Also has an inhibitory role in some cells. Non-covalently associates with activating receptors of the CD300 family to mediate cell activation. Also mediates cell activation through association with activating receptors of the CD200R family. Required for neutrophil activation mediated by integrin. Required for the activation of myeloid cells mediated by the CLEC5A/MDL1 receptor. Associates with natural killer (NK) cell receptors such as the KLRD1/KLRC2 heterodimer to mediate NK cell activation. Also associates non-covalently with the NK cell receptors KLRA4/LY49D and KLRA8/LY49H which leads to NK cell activation. Associates with TREM1 to mediate activation of neutrophils and monocytes. Associates with TREM2 on monocyte-derived dendritic cells to mediate up-regulation of chemokine receptor CCR7 and dendritic cell maturation and survival. Association with TREM2 mediates cytokine-induced formation of multinucleated giant cells which are formed by the fusion of macrophages. Stabilizes the TREM2 C-terminal fragment (TREM2-CTF) which is produced by TREM2 ectodomain shedding. In microglia, required with TREM2 for phagocytosis of apoptotic neurons. Required with ITGAM/CD11B in microglia to control production of microglial superoxide ions which promote the neuronal apoptosis that occurs during brain development. Promotes pro-inflammatory responses in microglia following nerve injury which accelerates degeneration of injured neurons. Positively regulates the expression of the IRAK3/IRAK-M kinase and IL10 production by liver dendritic cells and inhibits their T cell allostimulatory ability. Negatively regulates B cell proliferation. Required for CSF1-mediated osteoclast cytoskeletal organization. Positively regulates multinucleation during osteoclast development. The chain is TYRO protein tyrosine kinase-binding protein from Mus musculus (Mouse).